We begin with the raw amino-acid sequence, 313 residues long: Porphobilinogen deaminase (313 aa).

Cysteine 242 carries the S-(dipyrrolylmethanemethyl)cysteine modification.

This sequence belongs to the HMBS family. In terms of assembly, monomer. The cofactor is dipyrromethane.

It catalyses the reaction 4 porphobilinogen + H2O = hydroxymethylbilane + 4 NH4(+). Its pathway is porphyrin-containing compound metabolism; protoporphyrin-IX biosynthesis; coproporphyrinogen-III from 5-aminolevulinate: step 2/4. In terms of biological role, tetrapolymerization of the monopyrrole PBG into the hydroxymethylbilane pre-uroporphyrinogen in several discrete steps. The polypeptide is Porphobilinogen deaminase (Yersinia enterocolitica serotype O:8 / biotype 1B (strain NCTC 13174 / 8081)).